A 90-amino-acid chain; its full sequence is Cell division topological specificity factor (90 aa).

Residues 1–21 are disordered; sequence MAGFWSKLFSSEEKPSSAQTA. A compositionally biased stretch (basic and acidic residues) spans 10–21; sequence SSEEKPSSAQTA.

This sequence belongs to the MinE family.

Its function is as follows. Prevents the cell division inhibition by proteins MinC and MinD at internal division sites while permitting inhibition at polar sites. This ensures cell division at the proper site by restricting the formation of a division septum at the midpoint of the long axis of the cell. The protein is Cell division topological specificity factor of Acinetobacter baumannii (strain AB307-0294).